The following is a 102-amino-acid chain: Cysteine-rich venom protein VAR9 (102 aa).

An N-terminal signal peptide occupies residues methionine 1–glycine 19. Residues asparagine 41–lysine 80 enclose the SCP domain.

This sequence belongs to the CRISP family. Post-translationally, contains 8 disulfide bonds. Expressed by the venom gland.

Its subcellular location is the secreted. In terms of biological role, blocks ryanodine receptors, and potassium channels. The chain is Cysteine-rich venom protein VAR9 from Varanus varius (Lace monitor lizard).